A 317-amino-acid chain; its full sequence is Melanoma-associated antigen 4 (317 aa).

Residues 1–14 (MSSEQKSQHCKPEE) are compositionally biased toward basic and acidic residues. The segment at 1–102 (MSSEQKSQHC…EEGPSTSPDA (102 aa)) is disordered. Residues 66 to 82 (PQGASALPTTISFTCWR) are compositionally biased toward polar residues. An MAGE domain is found at 110–309 (LSNKVDELAH…IAYPSLREAA (200 aa)).

As to expression, expressed in many tumors of several types, such as melanoma, head and neck squamous cell carcinoma, lung carcinoma and breast carcinoma, but not in normal tissues except for testes and placenta.

Regulates cell proliferation through the inhibition of cell cycle arrest at the G1 phase. Also negatively regulates p53-mediated apoptosis. This is Melanoma-associated antigen 4 (MAGEA4) from Homo sapiens (Human).